Consider the following 501-residue polypeptide: Zinc finger protein 704 (501 aa).

Over residues 80-96 (SLKSTCNGGQRDGLTQG) the composition is skewed to polar residues. 3 disordered regions span residues 80–138 (SLKS…HTRS), 183–203 (PLVR…WKDG), and 216–267 (WSWS…LFDE). The segment covering 115–137 (EEPRVLEHKRTGRALETEKDHTR) has biased composition (basic and acidic residues). A C2H2-type zinc finger spans residues 281–306 (FKCLWKNCGKVLSTAAGIQRHIRTVH). Disordered regions lie at residues 340–380 (SLSP…SRSA), 398–419 (PVTI…FSIS), 427–446 (FTGT…GEQH), and 453–472 (LSSP…GEGK). The span at 368–380 (SESSSSTPLSRSA) shows a compositional bias: low complexity. Positions 472–476 (KKCRK) match the CR1 motif. The CR2 motif lies at 490-494 (CRWKK).

The protein resides in the nucleus. In terms of biological role, transcription factor. This chain is Zinc finger protein 704 (znf704), found in Danio rerio (Zebrafish).